A 225-amino-acid polypeptide reads, in one-letter code: Ras-related protein Rab-21 (225 aa).

N-acetylalanine is present on alanine 2. Residues glycine 28, glycine 31, lysine 32, threonine 33, serine 34, asparagine 45, aspartate 46, histidine 48, threonine 50, and threonine 51 each coordinate GTP. Threonine 33 contacts Mg(2+). The short motif at 43–56 (KFNDKHITTLQASF) is the Switch 1 element. Mg(2+)-binding residues include threonine 51 and aspartate 74. Residues 76 to 94 (AGQERFHALGPIYYRDSNG) carry the Switch 2 motif. GTP-binding residues include glycine 77, asparagine 132, lysine 133, aspartate 135, alanine 163, and lysine 164. Residues 188–225 (ERAKGNGSSQPGTARRGVQIIDDEPQAQTSGGGCCSSG) are disordered. 2 S-geranylgeranyl cysteine lipidation sites follow: cysteine 221 and cysteine 222. Cysteine 222 is subject to Cysteine methyl ester. Residues 223 to 225 (SSG) constitute a propeptide, removed in mature form.

The protein belongs to the small GTPase superfamily. Rab family. In terms of assembly, interacts with the cytoplasmic tail of integrins ITGA1, ITGA2, ITGA5, ITGA6, ITGA11 and ITGB1. Interacts with RABGEF1 (via VPS9 domain). Interacts with ANKRD27. Interacts with VAMP7. Interacts (in GTP-bound form) with VAMP8 in response to starvation; the interaction probably regulates VAMP8 endolysosomal trafficking. Interacts (active GTP-bound form) with TMED10; the interaction is indirect and regulates TMED10 abundance and localization at the Golgi. The cofactor is Mg(2+). As to expression, widely expressed. In jejunal tissue, predominantly expressed in the apical region of the epithelial cell layer of the villi, weak expression, if any, in the crypt epithelium. Capillary endothelium and some cell types in the lamina propria also show expression.

It localises to the endoplasmic reticulum membrane. The protein resides in the golgi apparatus. The protein localises to the trans-Golgi network. It is found in the golgi apparatus membrane. Its subcellular location is the early endosome membrane. It localises to the cytoplasmic vesicle membrane. The protein resides in the cleavage furrow. The protein localises to the cell projection. It is found in the neuron projection. It carries out the reaction GTP + H2O = GDP + phosphate + H(+). Regulated by guanine nucleotide exchange factors (GEFs) including ANKRD27 and RABGEF1, which promote the exchange of bound GDP for free GTP. Regulated by GTPase activating proteins (GAPs) which increase the GTP hydrolysis activity. Inhibited by GDP dissociation inhibitors (GDIs). Its function is as follows. The small GTPases Rab are key regulators of intracellular membrane trafficking, from the formation of transport vesicles to their fusion with membranes. Rabs cycle between an inactive GDP-bound form and an active GTP-bound form that is able to recruit to membranes different sets of downstream effectors directly responsible for vesicle formation, movement, tethering and fusion. RAB21 is involved in membrane trafficking control. During the mitosis of adherent cells, controls the endosomal trafficking of integrins which is required for the successful completion of cytokinesis. Regulates integrin internalization and recycling, but does not influence the traffic of endosomally translocated receptors in general. As a result, may regulate cell adhesion and migration. Involved in neurite growth. Following SBF2/MTMT13-mediated activation in response to starvation-induced autophagy, binds to and regulates SNARE protein VAMP8 endolysosomal transport required for SNARE-mediated autophagosome-lysosome fusion. Modulates protein levels of the cargo receptors TMED2 and TMED10, and required for appropriate Golgi localization of TMED10. This Homo sapiens (Human) protein is Ras-related protein Rab-21.